Reading from the N-terminus, the 127-residue chain is Small ribosomal subunit protein uS13 (127 aa).

The interval 96-127 is disordered; sequence LPCHGQRTSTNARTRKGPKRTAVKKKGAAKKK. Basic residues predominate over residues 108–127; it reads RTRKGPKRTAVKKKGAAKKK.

This sequence belongs to the universal ribosomal protein uS13 family. Part of the 30S ribosomal subunit. Forms a loose heterodimer with protein S19. Forms two bridges to the 50S subunit in the 70S ribosome.

Its function is as follows. Located at the top of the head of the 30S subunit, it contacts several helices of the 16S rRNA. In the 70S ribosome it contacts the 23S rRNA (bridge B1a) and protein L5 of the 50S subunit (bridge B1b), connecting the 2 subunits; these bridges are implicated in subunit movement. Contacts the tRNAs in the A and P-sites. The chain is Small ribosomal subunit protein uS13 from Desulfosudis oleivorans (strain DSM 6200 / JCM 39069 / Hxd3) (Desulfococcus oleovorans).